The chain runs to 108 residues: MIITTTENIHGYEIVEILGIVMGNIVQSKHLGKDIAAAFKTLAGGEIKAYTEMMTEARNKAIERMIDEAEKIGADAVVNVRFSSSSVMSGAAEMLAYGTAVKIKKSNE.

It belongs to the UPF0145 family.

This Thermosipho africanus (strain TCF52B) protein is UPF0145 protein THA_1434.